A 232-amino-acid polypeptide reads, in one-letter code: Platelet-activating factor acetylhydrolase IB subunit alpha1 (232 aa).

The interval 1–20 (MSGEGENPASKPTPVQDVQG) is disordered. Ser-2 is subject to N-acetylserine. Ser-2 is modified (phosphoserine). Residues Ser-48, Asp-193, and His-196 contribute to the active site.

This sequence belongs to the 'GDSL' lipolytic enzyme family. Platelet-activating factor acetylhydrolase IB beta/gamma subunits subfamily. As to quaternary structure, forms a catalytic dimer which is either homodimer (alpha1/alpha1 homodimer) or heterodimer with PAFAH1B2 (alpha1/alpha2 heterodimer). Component of the cytosolic (PAF-AH (I)) heterotetrameric enzyme, which is composed of PAFAH1B1 (beta), PAFAH1B2 (alpha2) and PAFAH1B3 (alpha1) subunits. The catalytic activity of the enzyme resides in the alpha1 (PAFAH1B3) and alpha2 (PAFAH1B2) subunits, whereas the beta subunit (PAFAH1B1) has regulatory activity. Trimer formation is not essential for the catalytic activity. Interacts with VLDLR; this interaction may modulate the Reelin pathway. As to expression, expressed in brain, spleen, lung, liver, kidney and testis. Not expressed in heart and skeletal muscle. Expressed in fetal brain as heterodimer. Not expressed in adult tissues. Expressed exclusively in granule cells.

Its subcellular location is the cytoplasm. The catalysed reaction is a 1-O-alkyl-2-acetyl-sn-glycero-3-phosphocholine + H2O = a 1-O-alkyl-sn-glycero-3-phosphocholine + acetate + H(+). The enzyme catalyses 1-O-hexadecyl-2-acetyl-sn-glycero-3-phosphocholine + H2O = 1-O-hexadecyl-sn-glycero-3-phosphocholine + acetate + H(+). It catalyses the reaction 1-O-hexadecyl-2-acetyl-sn-glycero-3-phosphate + H2O = 1-O-hexadecyl-sn-glycero-3-phosphate + acetate + H(+). Beta subunit (PAFAH1B1) inhibits the acetylhydrolase activity of the alpha1/alpha1 catalytic homodimer. Functionally, alpha1 catalytic subunit of the cytosolic type I platelet-activating factor (PAF) acetylhydrolase (PAF-AH (I)) heterotetrameric enzyme that catalyzes the hydrolyze of the acetyl group at the sn-2 position of PAF and its analogs and modulates the action of PAF. The activity and substrate specificity of PAF-AH (I) are affected by its subunit composition. Both alpha1/alpha1 homodimer (PAFAH1B3/PAFAH1B3 homodimer) and alpha1/alpha2 heterodimer(PAFAH1B3/PAFAH1B2 heterodimer) hydrolyze 1-O-alkyl-2-acetyl-sn-glycero-3-phosphoric acid (AAGPA) more efficiently than PAF, but they have little hydrolytic activity towards 1-O-alkyl-2-acetyl-sn-glycero-3-phosphorylethanolamine (AAGPE). Plays an important role during the development of brain. This Rattus norvegicus (Rat) protein is Platelet-activating factor acetylhydrolase IB subunit alpha1.